The sequence spans 544 residues: Glutamyl-tRNA(Gln) amidotransferase subunit B, chloroplastic/mitochondrial (544 aa).

It belongs to the GatB/GatE family. GatB subfamily. Subunit of the heterotrimeric GatCAB amidotransferase (AdT) complex, composed of A, B and C subunits.

It localises to the mitochondrion. The protein resides in the plastid. It is found in the chloroplast. The enzyme catalyses L-glutamyl-tRNA(Gln) + L-glutamine + ATP + H2O = L-glutaminyl-tRNA(Gln) + L-glutamate + ADP + phosphate + H(+). In terms of biological role, allows the formation of correctly charged Gln-tRNA(Gln) through the transamidation of misacylated Glu-tRNA(Gln) in chloroplasts and mitochondria. The reaction takes place in the presence of glutamine and ATP through an activated gamma-phospho-Glu-tRNA(Gln). The protein is Glutamyl-tRNA(Gln) amidotransferase subunit B, chloroplastic/mitochondrial of Oryza sativa subsp. japonica (Rice).